Consider the following 509-residue polypeptide: Bifunctional purine biosynthesis protein PurH (509 aa).

One can recognise an MGS-like domain in the interval Met1 to Val144.

It belongs to the PurH family.

The enzyme catalyses (6R)-10-formyltetrahydrofolate + 5-amino-1-(5-phospho-beta-D-ribosyl)imidazole-4-carboxamide = 5-formamido-1-(5-phospho-D-ribosyl)imidazole-4-carboxamide + (6S)-5,6,7,8-tetrahydrofolate. It catalyses the reaction IMP + H2O = 5-formamido-1-(5-phospho-D-ribosyl)imidazole-4-carboxamide. It participates in purine metabolism; IMP biosynthesis via de novo pathway; 5-formamido-1-(5-phospho-D-ribosyl)imidazole-4-carboxamide from 5-amino-1-(5-phospho-D-ribosyl)imidazole-4-carboxamide (10-formyl THF route): step 1/1. It functions in the pathway purine metabolism; IMP biosynthesis via de novo pathway; IMP from 5-formamido-1-(5-phospho-D-ribosyl)imidazole-4-carboxamide: step 1/1. This chain is Bifunctional purine biosynthesis protein PurH, found in Listeria monocytogenes serovar 1/2a (strain ATCC BAA-679 / EGD-e).